The chain runs to 785 residues: MRSCRSCNVRVLVAIVCGLLTGIVLGLGIWRMVIRINRGIFVPVPSIPVQFCRNGGTWQNGRCICTEEWKGLRCTIANFCENSTDGEFTFGSIPVGRYGPSLQTCEPGTLNAGSPKATRLCNVSEFGNIELQNVTKGSCNINLQTLEIQINNQTASAENISREAQVLTADASKLTAQNITSATTVVGQIFGKANNESQAKKTAIATVSQILDASEDVFQKAAEMDNSKSFSNLIKQMENYSYSQGDQTVVEPNIAIQSVTRDDNSGPSVLFSVQKGSSNSLVSGRILINKTANGLNPDGQTELQILLNTGENRKSCGFMVYQNHKLFQSKTFTATSDFSQKIISSKINESEQQRQNKVSVEMVFNPTYDKRELRLHSYACVYWNFLINDWDTQGCQKTGNTTEFLRCNCSHTTNFAVLMSFKKDYKYPKSLDILSNIGCALSIAGLALTILFQILTRKIRKTSVTWVLVSLCSSMLIFNLLFVFGIENSNKNLKTSDSDINVKPENNKIPESDTIETPNPSCTAIAALLHYFLLVTFTWNGLSATQLYFLLIRTMKPLPRHFIIFISLVGWGVPAIIVGVTIGSIYALSGNKRYWELDYRQEEICWLAVPKDNDYARSPLLWSFIIPVTIILITNITIFVIITVKVLWKNNQNLTSTKKVSSLKKVFSTLSIAVVFGVTWILAYAMLISNDDIRIVFSYIFCLFNTTQGLQIFILYTVRTKVFQSEASKILKSLSSSFDRTKPMPSITPLKLRVRMYNMLRSLPSLNERFRLLEPSGMTEETSLS.

Residues 1 to 26 (MRSCRSCNVRVLVAIVCGLLTGIVLG) form the signal peptide. Residues 27 to 435 (LGIWRMVIRI…KYPKSLDILS (409 aa)) lie on the Extracellular side of the membrane. N-linked (GlcNAc...) asparagine glycosylation is found at N82, N122, N133, N152, N159, N178, N195, N239, N289, N348, N400, and N408. In terms of domain architecture, GAIN-B spans 271 to 425 (FSVQKGSSNS…AVLMSFKKDY (155 aa)). Intrachain disulfides connect C380-C407 and C395-C409. Residues 380-425 (CVYWNFLINDWDTQGCQKTGNTTEFLRCNCSHTTNFAVLMSFKKDY) form a GPS region. The chain crosses the membrane as a helical span at residues 436 to 456 (NIGCALSIAGLALTILFQILT). Topologically, residues 457 to 465 (RKIRKTSVT) are cytoplasmic. The chain crosses the membrane as a helical span at residues 466 to 486 (WVLVSLCSSMLIFNLLFVFGI). Residues 487–523 (ENSNKNLKTSDSDINVKPENNKIPESDTIETPNPSCT) are Extracellular-facing. A helical transmembrane segment spans residues 524 to 544 (AIAALLHYFLLVTFTWNGLSA). At 545-561 (TQLYFLLIRTMKPLPRH) the chain is on the cytoplasmic side. The chain crosses the membrane as a helical span at residues 562-582 (FIIFISLVGWGVPAIIVGVTI). The Extracellular segment spans residues 583–623 (GSIYALSGNKRYWELDYRQEEICWLAVPKDNDYARSPLLWS). The helical transmembrane segment at 624–644 (FIIPVTIILITNITIFVIITV) threads the bilayer. Residues 645-668 (KVLWKNNQNLTSTKKVSSLKKVFS) are Cytoplasmic-facing. Residues 669–689 (TLSIAVVFGVTWILAYAMLIS) traverse the membrane as a helical segment. The Extracellular portion of the chain corresponds to 690-694 (NDDIR). Residues 695 to 715 (IVFSYIFCLFNTTQGLQIFIL) form a helical membrane-spanning segment. Residues 716 to 785 (YTVRTKVFQS…SGMTEETSLS (70 aa)) lie on the Cytoplasmic side of the membrane.

Belongs to the G-protein coupled receptor 2 family. Adhesion G-protein coupled receptor (ADGR) subfamily. Selectively expressed in the intestinal tissues.

It localises to the membrane. In terms of biological role, orphan receptor. The polypeptide is Adhesion G-protein coupled receptor G7 (Adgrg7) (Mus musculus (Mouse)).